The following is a 331-amino-acid chain: uncharacterized protein (331 aa).

Residue 43–50 participates in ATP binding; sequence GANESGKS.

This is an uncharacterized protein from Methanocaldococcus jannaschii (strain ATCC 43067 / DSM 2661 / JAL-1 / JCM 10045 / NBRC 100440) (Methanococcus jannaschii).